Consider the following 859-residue polypeptide: Envelope glycoprotein gp160 (859 aa).

A signal peptide spans 1-23; it reads MAYFSSRLPIALLLIGISGFVCK. The Extracellular segment spans residues 24-678; sequence QYVTVFYGIP…WFDLTSWIKY (655 aa). The N-linked (GlcNAc...) asparagine; by host glycan is linked to asparagine 37. A disulfide bridge links cysteine 44 with cysteine 57. N-linked (GlcNAc...) asparagine; by host glycosylation is found at asparagine 70, asparagine 112, asparagine 122, asparagine 142, asparagine 150, asparagine 165, asparagine 191, asparagine 206, asparagine 238, asparagine 241, asparagine 248, asparagine 272, asparagine 278, asparagine 289, asparagine 300, asparagine 310, asparagine 343, asparagine 367, asparagine 400, asparagine 410, asparagine 413, asparagine 450, asparagine 464, and asparagine 468. Cystine bridges form between cysteine 101/cysteine 214, cysteine 108/cysteine 205, cysteine 113/cysteine 164, cysteine 227/cysteine 257, and cysteine 237/cysteine 249. A V1 region spans residues 113–163; the sequence is CSKTETNPGNASSTTTTKPTTTSRGLKTINETDPCIKNDSCTGLGEEEIMQ. Residues 164 to 205 are V2; sequence CNFSMTGLRRDELKQYKDTWYSEDLECNNTRKYTSRCYIRTC. Positions 305-337 are V3; the sequence is CKRPGNKTVVPIRTVSGLLFHSQPINKRPRQAW. A disulfide bridge links cysteine 305 with cysteine 338. Intrachain disulfides connect cysteine 392-cysteine 449 and cysteine 399-cysteine 422. The tract at residues 399-422 is V4; the sequence is CNMTWFLNWVENKTNTTRRNYAPC. Positions 465–471 are V5; that stretch reads STTNISV. The segment at 514 to 534 is fusion peptide; the sequence is GVMVLGFLGFLAMAGSAMGAT. Residues 577-593 are immunosuppression; sequence LQARVTAIEKYLKDQAQ. 3 N-linked (GlcNAc...) asparagine; by host glycosylation sites follow: asparagine 613, asparagine 622, and asparagine 638. A coiled-coil region spans residues 626–647; it reads QQWEKQVHFLDANITALLEEAQ. An MPER; binding to GalCer region spans residues 659-680; sequence KINSWDVFGNWFDLTSWIKYIH. The helical transmembrane segment at 679–699 threads the bilayer; it reads IHLGLYIVAGLVVLRIVVYIV. The Cytoplasmic segment spans residues 700-859; sequence QMLARLRKGY…IRQGLELTLL (160 aa). Positions 709 to 712 match the YXXV motif; contains endocytosis signal motif; sequence YRPV. The interval 715 to 744 is disordered; sequence SPPSYTQQIPIRKDRGQPANEETEEGGGND. The S-palmitoyl cysteine; by host moiety is linked to residue cysteine 775. Residues 858–859 carry the Di-leucine internalization motif motif; that stretch reads LL.

The mature envelope protein (Env) consists of a homotrimer of non-covalently associated gp120-gp41 heterodimers. The resulting complex protrudes from the virus surface as a spike. There seems to be as few as 10 spikes on the average virion. Interacts with human CD4, CCR5 and CXCR4, to form a P4HB/PDI-CD4-CXCR4-gp120 complex. Gp120 also interacts with the C-type lectins CD209/DC-SIGN and CLEC4M/DC-SIGNR (collectively referred to as DC-SIGN(R)). Gp120 and gp41 interact with GalCer. As to quaternary structure, the mature envelope protein (Env) consists of a homotrimer of non-covalently associated gp120-gp41 heterodimers. The resulting complex protrudes from the virus surface as a spike. There seems to be as few as 10 spikes on the average virion. Post-translationally, specific enzymatic cleavages in vivo yield mature proteins. Envelope glycoproteins are synthesized as an inactive precursor that is heavily N-glycosylated and processed likely by host cell furin in the Golgi to yield the mature SU and TM proteins. The cleavage site between SU and TM requires the minimal sequence [KR]-X-[KR]-R. Palmitoylation of the transmembrane protein and of Env polyprotein (prior to its proteolytic cleavage) is essential for their association with host cell membrane lipid rafts. Palmitoylation is therefore required for envelope trafficking to classical lipid rafts, but not for viral replication.

It is found in the virion membrane. It localises to the host cell membrane. The protein resides in the host endosome membrane. In terms of biological role, the surface protein gp120 (SU) attaches the virus to the host lymphoid cell by binding to the primary receptor CD4. This interaction induces a structural rearrangement creating a high affinity binding site for a chemokine coreceptor like CXCR4 and/or CCR5. This peculiar 2 stage receptor-interaction strategy allows gp120 to maintain the highly conserved coreceptor-binding site in a cryptic conformation, protected from neutralizing antibodies. Since CD4 also displays a binding site for the disulfide-isomerase P4HB/PDI, a P4HB/PDI-CD4-CXCR4-gp120 complex may form. In that complex, P4HB/PDI could reach and reduce gp120 disulfide bonds, causing major conformational changes in gp120. TXN, another PDI family member could also be involved in disulfide rearrangements in Env during fusion. These changes are transmitted to the transmembrane protein gp41 and are thought to activate its fusogenic potential by unmasking its fusion peptide. Its function is as follows. The surface protein gp120 is a ligand for CD209/DC-SIGN and CLEC4M/DC-SIGNR, which are respectively found on dendritic cells (DCs), and on endothelial cells of liver sinusoids and lymph node sinuses. These interactions allow capture of viral particles at mucosal surfaces by these cells and subsequent transmission to permissive cells. DCs are professional antigen presenting cells, critical for host immunity by inducing specific immune responses against a broad variety of pathogens. They act as sentinels in various tissues where they take up antigen, process it, and present it to T-cells following migration to lymphoid organs. HIV subverts the migration properties of dendritic cells to gain access to CD4+ T-cells in lymph nodes. Virus transmission to permissive T-cells occurs either in trans (without DCs infection, through viral capture and transmission), or in cis (following DCs productive infection, through the usual CD4-gp120 interaction), thereby inducing a robust infection. In trans infection, bound virions remain infectious over days and it is proposed that they are not degraded, but protected in non-lysosomal acidic organelles within the DCs close to the cell membrane thus contributing to the viral infectious potential during DCs' migration from the periphery to the lymphoid tissues. On arrival at lymphoid tissues, intact virions recycle back to DCs' cell surface allowing virus transmission to CD4+ T-cells. Virion capture also seems to lead to MHC-II-restricted viral antigen presentation, and probably to the activation of HIV-specific CD4+ cells. Functionally, the transmembrane protein gp41 (TM) acts as a class I viral fusion protein. Under the current model, the protein has at least 3 conformational states: pre-fusion native state, pre-hairpin intermediate state, and post-fusion hairpin state. During fusion of viral and target intracellular membranes, the coiled coil regions (heptad repeats) assume a trimer-of-hairpins structure, positioning the fusion peptide in close proximity to the C-terminal region of the ectodomain. The formation of this structure appears to drive apposition and subsequent fusion of viral and target cell membranes. Complete fusion occurs in host cell endosomes and is dynamin-dependent, however some lipid transfer might occur at the plasma membrane. The virus undergoes clathrin-dependent internalization long before endosomal fusion, thus minimizing the surface exposure of conserved viral epitopes during fusion and reducing the efficacy of inhibitors targeting these epitopes. Membranes fusion leads to delivery of the nucleocapsid into the cytoplasm. The envelope glycoprotein gp160 precursor down-modulates cell surface CD4 antigen by interacting with it in the endoplasmic reticulum and blocking its transport to the cell surface. In terms of biological role, the gp120-gp41 heterodimer seems to contribute to T-cell depletion during HIV-1 infection. The envelope glycoproteins expressed on the surface of infected cells induce apoptosis through an interaction with uninfected cells expressing the receptor (CD4) and the coreceptors CXCR4 or CCR5. This type of bystander killing may be obtained by at least three distinct mechanisms. First, the interaction between the 2 cells can induce cellular fusion followed by nuclear fusion within the syncytium. Syncytia are condemned to die from apoptosis. Second, the 2 interacting cells may not fuse entirely and simply exchange plasma membrane lipids, after a sort of hemifusion process, followed by rapid death. Third, it is possible that virus-infected cells, on the point of undergoing apoptosis, fuse with CD4-expressing cells, in which case apoptosis is rapidly transmitted from one cell to the other and thus occurs in a sort of contagious fashion. Its function is as follows. The gp120-gp41 heterodimer allows rapid transcytosis of the virus through CD4 negative cells such as simple epithelial monolayers of the intestinal, rectal and endocervical epithelial barriers. Both gp120 and gp41 specifically recognize glycosphingolipids galactosyl-ceramide (GalCer) or 3' sulfo-galactosyl-ceramide (GalS) present in the lipid rafts structures of epithelial cells. Binding to these alternative receptors allows the rapid transcytosis of the virus through the epithelial cells. This transcytotic vesicle-mediated transport of virions from the apical side to the basolateral side of the epithelial cells does not involve infection of the cells themselves. In Human immunodeficiency virus type 2 subtype B (isolate D205) (HIV-2), this protein is Envelope glycoprotein gp160 (env).